The sequence spans 1034 residues: Putative beta-glucuronidase (1034 aa).

Glu432 serves as the catalytic Proton donor. The region spanning Val909–Asp1034 is the CBM6 domain.

This sequence belongs to the glycosyl hydrolase 2 family.

The protein localises to the cytoplasm. It carries out the reaction a beta-D-glucuronoside + H2O = D-glucuronate + an alcohol. Its function is as follows. Glycoside hydrolase that may be involved in ulvan degradation. Ulvan is the main polysaccharide component of the Ulvales (green seaweed) cell wall. It is composed of disaccharide building blocks comprising 3-sulfated rhamnose (Rha3S) linked to D-glucuronic acid (GlcA), L-iduronic acid (IduA), or D-xylose (Xyl). The sequence is that of Putative beta-glucuronidase from Formosa agariphila (strain DSM 15362 / KCTC 12365 / LMG 23005 / KMM 3901 / M-2Alg 35-1).